Consider the following 74-residue polypeptide: Defensin J1-2 (74 aa).

A signal peptide spans 1-27 (MAGFSKVIATIFLMMMLVFATGMVAEA). 4 disulfide bridges follow: Cys-30-Cys-74, Cys-41-Cys-61, Cys-47-Cys-68, and Cys-51-Cys-70.

It belongs to the DEFL family. As to quaternary structure, monomer. As to expression, expressed in flowers and in young fruits.

It localises to the secreted. Its function is as follows. Plant defense peptide with antifungal activity against F.oxysporum and B.cinerea. The protein is Defensin J1-2 of Capsicum annuum (Capsicum pepper).